Reading from the N-terminus, the 229-residue chain is Potassium/proton antiporter CemA (229 aa).

4 helical membrane-spanning segments follow: residues 7-27 (FTPL…SLSF), 114-134 (LICF…LLIL), 154-174 (ILLL…ELMI), and 189-209 (IISG…KYWI).

The protein belongs to the CemA family.

The protein localises to the plastid. It is found in the chloroplast inner membrane. The catalysed reaction is K(+)(in) + H(+)(out) = K(+)(out) + H(+)(in). Its function is as follows. Contributes to K(+)/H(+) antiport activity by supporting proton efflux to control proton extrusion and homeostasis in chloroplasts in a light-dependent manner to modulate photosynthesis. Prevents excessive induction of non-photochemical quenching (NPQ) under continuous-light conditions. Indirectly promotes efficient inorganic carbon uptake into chloroplasts. The sequence is that of Potassium/proton antiporter CemA from Gossypium hirsutum (Upland cotton).